A 1001-amino-acid polypeptide reads, in one-letter code: Phosphoenolpyruvate carboxylase (1001 aa).

Catalysis depends on residues His-189 and Lys-642.

The protein belongs to the PEPCase type 1 family. Mg(2+) is required as a cofactor.

It catalyses the reaction oxaloacetate + phosphate = phosphoenolpyruvate + hydrogencarbonate. In terms of biological role, forms oxaloacetate, a four-carbon dicarboxylic acid source for the tricarboxylic acid cycle. This Prochlorococcus marinus (strain SARG / CCMP1375 / SS120) protein is Phosphoenolpyruvate carboxylase.